The chain runs to 180 residues: Inner membrane-spanning protein YciB (180 aa).

5 consecutive transmembrane segments (helical) span residues 22–42 (IFVASGALIVATLLALAFTWF), 50–70 (MTLVTAIMVLVFGTLTLAFHS), 72–92 (LFIKWKVTVLYVLFAVALLVS), 121–141 (MSWAVFFLVCGLLNIYVAFWL), and 149–169 (FKVFGLTALTLVFTLISGVYI).

Belongs to the YciB family.

It localises to the cell inner membrane. In terms of biological role, plays a role in cell envelope biogenesis, maintenance of cell envelope integrity and membrane homeostasis. The protein is Inner membrane-spanning protein YciB of Yersinia enterocolitica serotype O:8 / biotype 1B (strain NCTC 13174 / 8081).